The sequence spans 164 residues: UPF0225 protein Shewmr7_1921 (164 aa).

This sequence belongs to the UPF0225 family.

The protein is UPF0225 protein Shewmr7_1921 of Shewanella sp. (strain MR-7).